The chain runs to 169 residues: Probable metallophosphoesterase YsnB (169 aa).

Mn(2+) contacts are provided by D8, H10, D35, N54, H78, H107, and H109.

It belongs to the metallophosphoesterase superfamily. YfcE family. The cofactor is Mn(2+).

This is Probable metallophosphoesterase YsnB (ysnB) from Bacillus subtilis (strain 168).